The sequence spans 122 residues: Ribonuclease P protein component (122 aa).

It belongs to the RnpA family. As to quaternary structure, consists of a catalytic RNA component (M1 or rnpB) and a protein subunit.

The enzyme catalyses Endonucleolytic cleavage of RNA, removing 5'-extranucleotides from tRNA precursor.. Its function is as follows. RNaseP catalyzes the removal of the 5'-leader sequence from pre-tRNA to produce the mature 5'-terminus. It can also cleave other RNA substrates such as 4.5S RNA. The protein component plays an auxiliary but essential role in vivo by binding to the 5'-leader sequence and broadening the substrate specificity of the ribozyme. The polypeptide is Ribonuclease P protein component (Oenococcus oeni (strain ATCC BAA-331 / PSU-1)).